Consider the following 426-residue polypeptide: Phosphomethylpyrimidine synthase (426 aa).

Residues asparagine 65, methionine 94, tyrosine 123, histidine 162, 184–186 (SRG), 225–228 (DGMR), and glutamate 264 contribute to the substrate site. Histidine 268 serves as a coordination point for Zn(2+). Tyrosine 291 is a binding site for substrate. Zn(2+) is bound at residue histidine 332. Residues cysteine 408, cysteine 411, and cysteine 415 each contribute to the [4Fe-4S] cluster site.

It belongs to the ThiC family. It depends on [4Fe-4S] cluster as a cofactor.

The enzyme catalyses 5-amino-1-(5-phospho-beta-D-ribosyl)imidazole + S-adenosyl-L-methionine = 4-amino-2-methyl-5-(phosphooxymethyl)pyrimidine + CO + 5'-deoxyadenosine + formate + L-methionine + 3 H(+). It functions in the pathway cofactor biosynthesis; thiamine diphosphate biosynthesis. Functionally, catalyzes the synthesis of the hydroxymethylpyrimidine phosphate (HMP-P) moiety of thiamine from aminoimidazole ribotide (AIR) in a radical S-adenosyl-L-methionine (SAM)-dependent reaction. This chain is Phosphomethylpyrimidine synthase, found in Methanococcus maripaludis (strain C5 / ATCC BAA-1333).